A 325-amino-acid chain; its full sequence is MKKNYYALAYYHFTRVDNPQEEIALHKELFKKLDVSCRIYISEQGINGQFSGYQPDAEYYMNWLKQRPGFSNVKFKIHHIEENIFPRATVKYRKELVALGCDVDLSNQGKHISPKEWHEKLEENRCLVLDVRNNYEWKIGHFENAVLPDIQTFREFPEYAEQLSKEHDPETTPVMMYCTGGIRCELYSSLLLEKGFKEVYQLDGGVIAYGQAMGTGKWRGKLFVFDDRLAVPIDEADTDVSPIAQCSHCEASCDTYYNCANTDCNNLFICCEECIHSTKGCCSQECSQAPRIRSFSTSRGNKPFRRMHLCEISEEQEKPLSCCLR.

The Rhodanese domain occupies 122 to 218 (EENRCLVLDV…YGQAMGTGKW (97 aa)). Cys-178 functions as the Cysteine persulfide intermediate in the catalytic mechanism.

The protein belongs to the TrhO family.

The catalysed reaction is uridine(34) in tRNA + AH2 + O2 = 5-hydroxyuridine(34) in tRNA + A + H2O. Its function is as follows. Catalyzes oxygen-dependent 5-hydroxyuridine (ho5U) modification at position 34 in tRNAs. The sequence is that of tRNA uridine(34) hydroxylase from Chlamydia felis (strain Fe/C-56) (Chlamydophila felis).